Reading from the N-terminus, the 592-residue chain is Aspartate--tRNA(Asp/Asn) ligase (592 aa).

Residue Glu176 coordinates L-aspartate. Residues 200 to 203 (QIFK) are aspartate. Position 222 (Arg222) interacts with L-aspartate. ATP contacts are provided by residues 222–224 (RDE) and Gln231. L-aspartate is bound at residue His450. Glu484 lines the ATP pocket. Arg491 is a binding site for L-aspartate. An ATP-binding site is contributed by 536–539 (GLDR).

This sequence belongs to the class-II aminoacyl-tRNA synthetase family. Type 1 subfamily. As to quaternary structure, homodimer.

It localises to the cytoplasm. The catalysed reaction is tRNA(Asx) + L-aspartate + ATP = L-aspartyl-tRNA(Asx) + AMP + diphosphate. Aspartyl-tRNA synthetase with relaxed tRNA specificity since it is able to aspartylate not only its cognate tRNA(Asp) but also tRNA(Asn). Reaction proceeds in two steps: L-aspartate is first activated by ATP to form Asp-AMP and then transferred to the acceptor end of tRNA(Asp/Asn). The polypeptide is Aspartate--tRNA(Asp/Asn) ligase (Anoxybacillus flavithermus (strain DSM 21510 / WK1)).